Here is a 277-residue protein sequence, read N- to C-terminus: Large ribosomal subunit protein uL2 (277 aa).

2 disordered regions span residues 1 to 55 (MGIR…RHQG) and 217 to 277 (KRPS…KKKR). A compositionally biased stretch (basic residues) spans 37–55 (LHSKGGRNGHGRITARHQG).

It belongs to the universal ribosomal protein uL2 family. Part of the 50S ribosomal subunit. Forms a bridge to the 30S subunit in the 70S ribosome.

Functionally, one of the primary rRNA binding proteins. Required for association of the 30S and 50S subunits to form the 70S ribosome, for tRNA binding and peptide bond formation. It has been suggested to have peptidyltransferase activity; this is somewhat controversial. Makes several contacts with the 16S rRNA in the 70S ribosome. The chain is Large ribosomal subunit protein uL2 from Thermobifida fusca (strain YX).